We begin with the raw amino-acid sequence, 107 residues long: Nucleoid-associated protein Mmar10_0436 (107 aa).

Belongs to the YbaB/EbfC family. Homodimer.

The protein resides in the cytoplasm. Its subcellular location is the nucleoid. Its function is as follows. Binds to DNA and alters its conformation. May be involved in regulation of gene expression, nucleoid organization and DNA protection. This is Nucleoid-associated protein Mmar10_0436 from Maricaulis maris (strain MCS10) (Caulobacter maris).